The primary structure comprises 353 residues: Probable peptide ABC transporter ATP-binding protein y4tS (353 aa).

In terms of domain architecture, ABC transporter spans 6–256 (LKVESLTKHY…PVHPYTEALI (251 aa)). An ATP-binding site is contributed by 49-56 (GESGCGKS).

Belongs to the ABC transporter superfamily.

It localises to the cell inner membrane. In terms of biological role, probably part of a binding-protein-dependent transport system y4tOPQRS for a peptide. Probably responsible for energy coupling to the transport system. This chain is Probable peptide ABC transporter ATP-binding protein y4tS, found in Sinorhizobium fredii (strain NBRC 101917 / NGR234).